Here is a 451-residue protein sequence, read N- to C-terminus: Bifunctional protein GlmU (451 aa).

Residues 1-225 (MVVVAILAAG…YQEILGINDR (225 aa)) are pyrophosphorylase. Residues 7–10 (LAAG), K21, Q72, and 77–78 (GT) each bind UDP-N-acetyl-alpha-D-glucosamine. D102 is a binding site for Mg(2+). 4 residues coordinate UDP-N-acetyl-alpha-D-glucosamine: G139, E154, N169, and N223. N223 serves as a coordination point for Mg(2+). The tract at residues 226 to 246 (LQLATAYEILQRRVKEQWMMA) is linker. The interval 247–451 (GVTLIDPNSI…LGWRRKSGES (205 aa)) is N-acetyltransferase. The UDP-N-acetyl-alpha-D-glucosamine site is built by R328 and K346. H358 (proton acceptor) is an active-site residue. Positions 361 and 372 each coordinate UDP-N-acetyl-alpha-D-glucosamine. Residues A375, 381-382 (NY), S400, A418, and R435 each bind acetyl-CoA.

It in the N-terminal section; belongs to the N-acetylglucosamine-1-phosphate uridyltransferase family. This sequence in the C-terminal section; belongs to the transferase hexapeptide repeat family. As to quaternary structure, homotrimer. Mg(2+) is required as a cofactor.

The protein resides in the cytoplasm. The enzyme catalyses alpha-D-glucosamine 1-phosphate + acetyl-CoA = N-acetyl-alpha-D-glucosamine 1-phosphate + CoA + H(+). The catalysed reaction is N-acetyl-alpha-D-glucosamine 1-phosphate + UTP + H(+) = UDP-N-acetyl-alpha-D-glucosamine + diphosphate. It participates in nucleotide-sugar biosynthesis; UDP-N-acetyl-alpha-D-glucosamine biosynthesis; N-acetyl-alpha-D-glucosamine 1-phosphate from alpha-D-glucosamine 6-phosphate (route II): step 2/2. The protein operates within nucleotide-sugar biosynthesis; UDP-N-acetyl-alpha-D-glucosamine biosynthesis; UDP-N-acetyl-alpha-D-glucosamine from N-acetyl-alpha-D-glucosamine 1-phosphate: step 1/1. It functions in the pathway bacterial outer membrane biogenesis; LPS lipid A biosynthesis. Its function is as follows. Catalyzes the last two sequential reactions in the de novo biosynthetic pathway for UDP-N-acetylglucosamine (UDP-GlcNAc). The C-terminal domain catalyzes the transfer of acetyl group from acetyl coenzyme A to glucosamine-1-phosphate (GlcN-1-P) to produce N-acetylglucosamine-1-phosphate (GlcNAc-1-P), which is converted into UDP-GlcNAc by the transfer of uridine 5-monophosphate (from uridine 5-triphosphate), a reaction catalyzed by the N-terminal domain. The sequence is that of Bifunctional protein GlmU from Nostoc sp. (strain PCC 7120 / SAG 25.82 / UTEX 2576).